The chain runs to 881 residues: Band 4.1-like protein 1 (881 aa).

An N-acetylmethionine modification is found at Met-1. The segment at 1–88 (MTTETGPDSE…TPSKAQKSPQ (88 aa)) is disordered. Positions 17 to 35 (EAPQQPEAAAAVTTPVTPA) are enriched in low complexity. Thr-30 is subject to Phosphothreonine. Positions 38 to 50 (GHPEANSNEKHPS) are enriched in basic and acidic residues. At Ser-75 the chain carries Phosphoserine. Polar residues predominate over residues 76–87 (ERTTPSKAQKSP). A Phosphothreonine modification is found at Thr-79. In terms of domain architecture, FERM spans 97-378 (AICRVTLLDA…EHHTFFRLVS (282 aa)). Tyr-343 bears the Phosphotyrosine mark. Phosphoserine occurs at positions 378, 430, and 437. Residues 428–501 (SRSLDGAEFS…HKQEFLDKPE (74 aa)) form a disordered region. Over residues 444–457 (ENHDAGPDGDKRDE) the composition is skewed to basic and acidic residues. Phosphoserine is present on residues Ser-461 and Ser-466. The span at 466-501 (SEAEEGEVRTPTKIKELKPEQETTPRHKQEFLDKPE) shows a compositional bias: basic and acidic residues. A Phosphothreonine modification is found at Thr-475. Residues 483–541 (KPEQETTPRHKQEFLDKPEDVLLKHQASINELKRTLKEPNSKLIHRDRDWERERRLPSS) are spectrin--actin-binding. At Ser-510 the chain carries Phosphoserine. Residues 514 to 538 (LKRTLKEPNSKLIHRDRDWERERRL) show a composition bias toward basic and acidic residues. Residues 514–596 (LKRTLKEPNS…QERDTVFLKD (83 aa)) form a disordered region. Phosphoserine occurs at positions 540, 541, 544, and 546. Thr-550 carries the phosphothreonine modification. The span at 550–577 (TPEKANERAGLREGSEEKVKPPRPRAPE) shows a compositional bias: basic and acidic residues. Phosphoserine occurs at positions 564 and 578. Phosphothreonine is present on Thr-580. A phosphoserine mark is found at Ser-639, Ser-648, Ser-650, Ser-667, Ser-672, Ser-678, and Ser-685. The tract at residues 642-699 (ELDRDKSDSDTEGLLFSRDLNKGAPSQDDESGGIEDSPDRGACSTPDMPQFEPVKTET) is disordered. Position 686 is a phosphothreonine (Thr-686). Phosphoserine is present on residues Ser-722, Ser-784, and Ser-870. Residues 746-881 (SITTETISTT…EERDKKPQES (136 aa)) form a C-terminal (CTD) region.

Interacts with AGAP2. In terms of tissue distribution, highest expression in brain, lower in heart, kidney, pancreas, placenta, lung and skeletal muscle.

The protein localises to the cytoplasm. The protein resides in the cytoskeleton. Its function is as follows. May function to confer stability and plasticity to neuronal membrane via multiple interactions, including the spectrin-actin-based cytoskeleton, integral membrane channels and membrane-associated guanylate kinases. In Homo sapiens (Human), this protein is Band 4.1-like protein 1.